We begin with the raw amino-acid sequence, 410 residues long: Serine hydroxymethyltransferase (410 aa).

(6S)-5,6,7,8-tetrahydrofolate contacts are provided by residues Leu119 and 123 to 125; that span reads GHL. Lys228 carries the N6-(pyridoxal phosphate)lysine modification. 351-353 serves as a coordination point for (6S)-5,6,7,8-tetrahydrofolate; it reads SPF.

This sequence belongs to the SHMT family. As to quaternary structure, homodimer. Pyridoxal 5'-phosphate serves as cofactor.

It localises to the cytoplasm. The catalysed reaction is (6R)-5,10-methylene-5,6,7,8-tetrahydrofolate + glycine + H2O = (6S)-5,6,7,8-tetrahydrofolate + L-serine. Its pathway is one-carbon metabolism; tetrahydrofolate interconversion. It functions in the pathway amino-acid biosynthesis; glycine biosynthesis; glycine from L-serine: step 1/1. Functionally, catalyzes the reversible interconversion of serine and glycine with tetrahydrofolate (THF) serving as the one-carbon carrier. This reaction serves as the major source of one-carbon groups required for the biosynthesis of purines, thymidylate, methionine, and other important biomolecules. Also exhibits THF-independent aldolase activity toward beta-hydroxyamino acids, producing glycine and aldehydes, via a retro-aldol mechanism. The chain is Serine hydroxymethyltransferase from Alkaliphilus metalliredigens (strain QYMF).